The following is a 467-amino-acid chain: ATP-dependent protease ATPase subunit HslU (467 aa).

Residues Val-20, 62-67 (GVGKTE), Asp-280, Glu-345, and Arg-417 contribute to the ATP site.

Belongs to the ClpX chaperone family. HslU subfamily. As to quaternary structure, a double ring-shaped homohexamer of HslV is capped on each side by a ring-shaped HslU homohexamer. The assembly of the HslU/HslV complex is dependent on binding of ATP.

The protein resides in the cytoplasm. Its function is as follows. ATPase subunit of a proteasome-like degradation complex; this subunit has chaperone activity. The binding of ATP and its subsequent hydrolysis by HslU are essential for unfolding of protein substrates subsequently hydrolyzed by HslV. HslU recognizes the N-terminal part of its protein substrates and unfolds these before they are guided to HslV for hydrolysis. This chain is ATP-dependent protease ATPase subunit HslU, found in Enterococcus faecalis (strain ATCC 700802 / V583).